Here is a 174-residue protein sequence, read N- to C-terminus: Early E1A protein (174 aa).

Positions 40–48 (PSLHDLFDL) are interaction with RB1 in competition with E2F1. The short motif at 106-110 (LLCLE) is the LXCXE motif, interaction with host RB1 element. A zinc finger spans residues 145–163 (CLRCAYYQEQGENSICGLC).

It belongs to the adenoviridae E1A protein family. In terms of assembly, interacts with host UBE2I; this interaction interferes with polySUMOylation. Interacts with host RB1; this interaction induces the aberrant dissociation of RB1-E2F1 complex thereby disrupting the activity of RB1 and activating E2F1-regulated genes. Interacts with host ATF7; the interaction enhances ATF7-mediated viral transactivation activity which requires the zinc binding domains of both proteins. Isoform early E1A 32 kDa protein and isoform early E1A 26 kDa protein interact (via N-terminus) with CUL1 and E3 ubiquitin ligase RBX1; these interactions inhibit RBX1-CUL1-dependent elongation reaction of ubiquitin chains and attenuate ubiquitination of SCF(FBXW7) target proteins. Interacts (via PXLXP motif) with host ZMYND11/BS69 (via MYND-type zinc finger); this interaction inhibits E1A mediated transactivation. Interacts with host EP300; this interaction stimulates the acetylation of RB1 by recruiting EP300 and RB1 into a multimeric-protein complex. Interacts with host CTBP1 and CTBP2; this interaction seems to potentiate viral replication. Interacts with host DCAF7. Interacts with host DYRK1A. Interacts with host KPNA4; this interaction allows E1A import into the host nucleus. Interacts with host EP400; this interaction stabilizes MYC. Interacts with host TBP protein; this interaction probably disrupts the TBP-TATA complex.

It is found in the host nucleus. In terms of biological role, plays a role in viral genome replication by driving entry of quiescent cells into the cell cycle. Stimulation of progression from G1 to S phase allows the virus to efficiently use the cellular DNA replicating machinery to achieve viral genome replication. E1A protein has both transforming and trans-activating activities. Induces the disassembly of the E2F1 transcription factor from RB1 by direct competition for the same binding site on RB1, with subsequent transcriptional activation of E2F1-regulated S-phase genes and of the E2 region of the adenoviral genome. Release of E2F1 leads to the ARF-mediated inhibition of MDM2 and causes TP53/p53 to accumulate because it is not targeted for degradation by MDM2-mediated ubiquitination anymore. This increase in TP53, in turn, would arrest the cell proliferation and direct its death but this effect is counteracted by the viral protein E1B-55K. Inactivation of the ability of RB1 to arrest the cell cycle is critical for cellular transformation, uncontrolled cellular growth and proliferation induced by viral infection. Interaction with RBX1 and CUL1 inhibits ubiquitination of the proteins targeted by SCF(FBXW7) ubiquitin ligase complex, and may be linked to unregulated host cell proliferation. The tumorigenesis-restraining activity of E1A may be related to the disruption of the host CtBP-CtIP complex through the CtBP binding motif. This chain is Early E1A protein, found in Canine adenovirus serotype 1 (strain RI261) (CAdV-1).